We begin with the raw amino-acid sequence, 429 residues long: UDP-N-acetylglucosamine 1-carboxyvinyltransferase (429 aa).

22–23 contributes to the phosphoenolpyruvate binding site; it reads KN. Arginine 102 serves as a coordination point for UDP-N-acetyl-alpha-D-glucosamine. Residue cysteine 126 is the Proton donor of the active site. Cysteine 126 carries the 2-(S-cysteinyl)pyruvic acid O-phosphothioketal modification. Residues 131-135, aspartate 316, and isoleucine 338 contribute to the UDP-N-acetyl-alpha-D-glucosamine site; that span reads RPVDL.

This sequence belongs to the EPSP synthase family. MurA subfamily.

The protein resides in the cytoplasm. It catalyses the reaction phosphoenolpyruvate + UDP-N-acetyl-alpha-D-glucosamine = UDP-N-acetyl-3-O-(1-carboxyvinyl)-alpha-D-glucosamine + phosphate. It participates in cell wall biogenesis; peptidoglycan biosynthesis. In terms of biological role, cell wall formation. Adds enolpyruvyl to UDP-N-acetylglucosamine. This chain is UDP-N-acetylglucosamine 1-carboxyvinyltransferase, found in Rhodopseudomonas palustris (strain TIE-1).